We begin with the raw amino-acid sequence, 67 residues long: Ferredoxin FdxE (67 aa).

[3Fe-4S] cluster contacts are provided by Cys10, Val11, Gln15, Cys16, and Cys54.

As to quaternary structure, interacts with the cytochrome P450 143 with high affinity (Kd=84 nM). The cofactor is [3Fe-4S] cluster.

Ferredoxin that is the redox partner of cytochrome CYP143, a cytochrome P450 encoded by an adjacent gene. In Mycobacterium tuberculosis (strain ATCC 25618 / H37Rv), this protein is Ferredoxin FdxE.